A 118-amino-acid chain; its full sequence is Large ribosomal subunit protein bL20 (118 aa).

The protein belongs to the bacterial ribosomal protein bL20 family.

In terms of biological role, binds directly to 23S ribosomal RNA and is necessary for the in vitro assembly process of the 50S ribosomal subunit. It is not involved in the protein synthesizing functions of that subunit. The chain is Large ribosomal subunit protein bL20 from Azotobacter vinelandii.